A 146-amino-acid polypeptide reads, in one-letter code: 3-dehydroquinate dehydratase (146 aa).

The Proton acceptor role is filled by Y23. N75, H81, and D88 together coordinate substrate. The active-site Proton donor is the H101. Substrate contacts are provided by residues 102 to 103 (LS) and R112.

The protein belongs to the type-II 3-dehydroquinase family. As to quaternary structure, homododecamer.

It carries out the reaction 3-dehydroquinate = 3-dehydroshikimate + H2O. It functions in the pathway metabolic intermediate biosynthesis; chorismate biosynthesis; chorismate from D-erythrose 4-phosphate and phosphoenolpyruvate: step 3/7. Its function is as follows. Catalyzes a trans-dehydration via an enolate intermediate. This is 3-dehydroquinate dehydratase from Saccharophagus degradans (strain 2-40 / ATCC 43961 / DSM 17024).